Reading from the N-terminus, the 312-residue chain is Aldehyde reductase YPR1 (312 aa).

Catalysis depends on Tyr-56, which acts as the Proton donor. His-112 is a substrate binding site. 220 to 274 (SPFGSANAPLLKEQAIIDMAKKHGVEPAQLIISWSIQRGYVVLAKSVNPERIVSN) contributes to the NADP(+) binding site.

The protein belongs to the aldo/keto reductase family.

It localises to the cytoplasm. The catalysed reaction is a primary alcohol + NADP(+) = an aldehyde + NADPH + H(+). The enzyme catalyses 2-methylbutan-1-ol + NADP(+) = 2-methylbutanal + NADPH + H(+). It catalyses the reaction hexan-1-ol + NADP(+) = hexanal + NADPH + H(+). Functionally, aldehyde reductase with broad substrate specificity, catalyzing the NADPH-dependent reduction of aldehydes into the corresponding alcohols. In vitro, displays high specific activity towards 2-methylbutanal (2-methylbutyraldehyde), as well as other aldehydes such as hexanal (a toxic lipid peroxidation product and phytoalexin), but exhibits extremely low activity as a glycerol dehydrogenase. Seems to contribute to 2-methylbutanal reduction in vivo, and may therefore play a role in isoleucine catabolism and fusel alcohol formation. The chain is Aldehyde reductase YPR1 (YPR1) from Saccharomyces cerevisiae (strain ATCC 204508 / S288c) (Baker's yeast).